A 379-amino-acid polypeptide reads, in one-letter code: Cobalt-precorrin-5B C(1)-methyltransferase (379 aa).

Belongs to the CbiD family.

It carries out the reaction Co-precorrin-5B + S-adenosyl-L-methionine = Co-precorrin-6A + S-adenosyl-L-homocysteine. Its pathway is cofactor biosynthesis; adenosylcobalamin biosynthesis; cob(II)yrinate a,c-diamide from sirohydrochlorin (anaerobic route): step 6/10. Catalyzes the methylation of C-1 in cobalt-precorrin-5B to form cobalt-precorrin-6A. The polypeptide is Cobalt-precorrin-5B C(1)-methyltransferase (Salmonella paratyphi B (strain ATCC BAA-1250 / SPB7)).